A 211-amino-acid polypeptide reads, in one-letter code: 2,3-bisphosphoglycerate-dependent phosphoglycerate mutase (211 aa).

Residues 9–16 (RHGQSDWN), 22–23 (TG), Arg61, 88–91 (ERDY), Lys99, 115–116 (RR), and 159–160 (GN) each bind substrate. The active-site Tele-phosphohistidine intermediate is the His10. The active-site Proton donor/acceptor is Glu88.

The protein belongs to the phosphoglycerate mutase family. BPG-dependent PGAM subfamily. As to quaternary structure, homodimer.

The catalysed reaction is (2R)-2-phosphoglycerate = (2R)-3-phosphoglycerate. It functions in the pathway carbohydrate degradation; glycolysis; pyruvate from D-glyceraldehyde 3-phosphate: step 3/5. Its function is as follows. Catalyzes the interconversion of 2-phosphoglycerate and 3-phosphoglycerate. The chain is 2,3-bisphosphoglycerate-dependent phosphoglycerate mutase from Allorhizobium ampelinum (strain ATCC BAA-846 / DSM 112012 / S4) (Agrobacterium vitis (strain S4)).